We begin with the raw amino-acid sequence, 184 residues long: Endoribonuclease YbeY (184 aa).

Zn(2+) is bound by residues H118, H122, and H128. The disordered stretch occupies residues 156-184; the sequence is YHQDRQSQKDQRLLDKSRYFDELNHGDTP. Positions 157–184 are enriched in basic and acidic residues; sequence HQDRQSQKDQRLLDKSRYFDELNHGDTP.

Belongs to the endoribonuclease YbeY family. Zn(2+) is required as a cofactor.

The protein localises to the cytoplasm. Its function is as follows. Single strand-specific metallo-endoribonuclease involved in late-stage 70S ribosome quality control and in maturation of the 3' terminus of the 16S rRNA. The chain is Endoribonuclease YbeY from Mycolicibacterium vanbaalenii (strain DSM 7251 / JCM 13017 / BCRC 16820 / KCTC 9966 / NRRL B-24157 / PYR-1) (Mycobacterium vanbaalenii).